Here is a 569-residue protein sequence, read N- to C-terminus: Urease subunit alpha (569 aa).

Residues 131-569 (GGIDTHIHFI…LPMAQRYFLL (439 aa)) enclose the Urease domain. Positions 136, 138, and 219 each coordinate Ni(2+). N6-carboxylysine is present on Lys-219. His-221 contacts substrate. Residues His-248 and His-274 each coordinate Ni(2+). Catalysis depends on His-322, which acts as the Proton donor. Asp-362 is a binding site for Ni(2+).

Belongs to the metallo-dependent hydrolases superfamily. Urease alpha subunit family. As to quaternary structure, heterotrimer of UreA (gamma), UreB (beta) and UreC (alpha) subunits. Three heterotrimers associate to form the active enzyme. Requires Ni cation as cofactor. Post-translationally, carboxylation allows a single lysine to coordinate two nickel ions.

Its subcellular location is the cytoplasm. It carries out the reaction urea + 2 H2O + H(+) = hydrogencarbonate + 2 NH4(+). Its pathway is nitrogen metabolism; urea degradation; CO(2) and NH(3) from urea (urease route): step 1/1. The polypeptide is Urease subunit alpha (Synechococcus sp. (strain RCC307)).